A 260-amino-acid polypeptide reads, in one-letter code: MRANNHFKDFAWKKCLLGASVVALLVGCSPHIIETNEVALKLNYHPASEKVQALDEKILLLRPAFQYSDNIAKEYENKFKNQTALKVEQILQNQGYKVISVDSSDKDDFSFAQKKEGYLAVAMNGEIVLRPDPKRTIQKKSEPGLLFSTGLDKMEGVLIPAGFIKVTILEPMSGESLDSFTMDLSELDIQEKFLKTTHSSHSGGLVSTMVKGTDNSNDAIKSALNKIFANIMQEIDKKLTQKNLESYQKDAKELKGKRNR.

Residues Met1 to Gly27 form the signal peptide. The N-palmitoyl cysteine moiety is linked to residue Cys28. Residue Cys28 is the site of S-diacylglycerol cysteine attachment. Residues Lys134–Lys139 are N-acetyl-neuraminyl-alpha(2,3)-lactose binding motif.

It localises to the cell outer membrane. This is Neuraminyllactose-binding hemagglutinin (hpaA) from Helicobacter pylori (Campylobacter pylori).